A 276-amino-acid polypeptide reads, in one-letter code: Large ribosomal subunit protein uL2 (276 aa).

The interval 224-258 is disordered; it reads VAMNPVDHPHGGGEGRTGEGRVPVSPWGTPTKGYR. Positions 230-242 are enriched in basic and acidic residues; it reads DHPHGGGEGRTGE.

It belongs to the universal ribosomal protein uL2 family. In terms of assembly, part of the 50S ribosomal subunit. Forms a bridge to the 30S subunit in the 70S ribosome.

One of the primary rRNA binding proteins. Required for association of the 30S and 50S subunits to form the 70S ribosome, for tRNA binding and peptide bond formation. It has been suggested to have peptidyltransferase activity; this is somewhat controversial. Makes several contacts with the 16S rRNA in the 70S ribosome. This Polynucleobacter necessarius subsp. necessarius (strain STIR1) protein is Large ribosomal subunit protein uL2.